The primary structure comprises 266 residues: Pyridoxal phosphate phosphatase YigL (266 aa).

Aspartate 8 serves as the catalytic Nucleophile. Mg(2+) is bound at residue aspartate 8. A phosphate-binding site is contributed by leucine 9. Residue aspartate 10 coordinates Mg(2+). Residues 42–43 (TG) and lysine 191 each bind phosphate. Position 214 (aspartate 214) interacts with Mg(2+). Asparagine 217 provides a ligand contact to phosphate.

Belongs to the HAD-like hydrolase superfamily. Cof family. Mg(2+) serves as cofactor. Requires Mn(2+) as cofactor. Co(2+) is required as a cofactor. It depends on Zn(2+) as a cofactor.

It carries out the reaction pyridoxal 5'-phosphate + H2O = pyridoxal + phosphate. The enzyme catalyses sugar phosphate + H2O = sugar + phosphate.. Its function is as follows. Catalyzes the dephosphorylation of pyridoxal-phosphate (PLP) and sugar phosphate. In Escherichia coli O157:H7, this protein is Pyridoxal phosphate phosphatase YigL (yigL).